The chain runs to 161 residues: Nucleotide-binding protein Gura_0717 (161 aa).

It belongs to the YajQ family.

In terms of biological role, nucleotide-binding protein. The polypeptide is Nucleotide-binding protein Gura_0717 (Geotalea uraniireducens (strain Rf4) (Geobacter uraniireducens)).